A 384-amino-acid chain; its full sequence is MSSVPAPREYFLDSIRAWLMLLGIPFHISLIYSTHSWHVNSATPSWWLTLFNDFIHAFRMQVFFVISGYFSYMLFLRYPLKRWWKVRVERVGIPMLTAIPLLTLPQFILLQYVKEKTENWPTLSAYEKYNTLAWELISHLWFLLVLVILTTVSIGIFTWFQKRQETSKPRPAAISLVRLSLIFFLLGMAYAAIRRIIFIVYPAILSDGMFNFIVMQTLFYVPFFILGALAFIHPDLKARFTTPSRGCTLGAAVAFIAYLLNQRYGSGDAWMYETESVITMVMGLWMVNVVFSLGHRLLNFQSARVTYFVNASLFIYLVHHPLTLFFGAYITPHISSNLIGFLCGLIFVMGIALILYEIHLRIPLLKFLFSGKPPVKQESRAAIG.

10 helical membrane passes run 17–37 (AWLM…THSW), 54–74 (FIHA…SYML), 91–111 (VGIP…ILLQ), 140–160 (LWFL…FTWF), 173–193 (AISL…YAAI), 212–232 (FIVM…LAFI), 240–260 (FTTP…AYLL), 274–294 (TESV…FSLG), 311–331 (ASLF…AYIT), and 338–358 (LIGF…LYEI).

Belongs to the acyltransferase 3 family. OpgC subfamily.

Its subcellular location is the cell membrane. It functions in the pathway glycan metabolism; osmoregulated periplasmic glucan (OPG) biosynthesis. Functionally, necessary for the succinyl substitution of periplasmic glucans. Could catalyze the transfer of succinyl residues from the cytoplasmic side of the membrane to the nascent glucan backbones on the periplasmic side of the membrane. This Salmonella choleraesuis (strain SC-B67) protein is Glucans biosynthesis protein C.